We begin with the raw amino-acid sequence, 425 residues long: Serine--tRNA ligase (425 aa).

231–233 contributes to the L-serine binding site; sequence TAE. Residue 262–264 participates in ATP binding; that stretch reads RSE. Glutamate 285 provides a ligand contact to L-serine. 349 to 352 contacts ATP; the sequence is EISS. Serine 385 is an L-serine binding site.

The protein belongs to the class-II aminoacyl-tRNA synthetase family. Type-1 seryl-tRNA synthetase subfamily. In terms of assembly, homodimer. The tRNA molecule binds across the dimer.

It is found in the cytoplasm. It carries out the reaction tRNA(Ser) + L-serine + ATP = L-seryl-tRNA(Ser) + AMP + diphosphate + H(+). It catalyses the reaction tRNA(Sec) + L-serine + ATP = L-seryl-tRNA(Sec) + AMP + diphosphate + H(+). Its pathway is aminoacyl-tRNA biosynthesis; selenocysteinyl-tRNA(Sec) biosynthesis; L-seryl-tRNA(Sec) from L-serine and tRNA(Sec): step 1/1. Catalyzes the attachment of serine to tRNA(Ser). Is also able to aminoacylate tRNA(Sec) with serine, to form the misacylated tRNA L-seryl-tRNA(Sec), which will be further converted into selenocysteinyl-tRNA(Sec). This Halalkalibacterium halodurans (strain ATCC BAA-125 / DSM 18197 / FERM 7344 / JCM 9153 / C-125) (Bacillus halodurans) protein is Serine--tRNA ligase.